Reading from the N-terminus, the 157-residue chain is Large ribosomal subunit protein bL20 (157 aa).

The interval 121-157 (TSAPAVSAEAAPKAKAAKKPAAKKAAAKKPVAEEAAK) is disordered. Low complexity predominate over residues 122 to 134 (SAPAVSAEAAPKA). Over residues 135–147 (KAAKKPAAKKAAA) the composition is skewed to basic residues.

It belongs to the bacterial ribosomal protein bL20 family.

In terms of biological role, binds directly to 23S ribosomal RNA and is necessary for the in vitro assembly process of the 50S ribosomal subunit. It is not involved in the protein synthesizing functions of that subunit. The sequence is that of Large ribosomal subunit protein bL20 (rplT) from Arthrobacter sp. (strain FB24).